Consider the following 836-residue polypeptide: Transcriptional regulatory protein UME6 (836 aa).

Basic and acidic residues predominate over residues 1–14; that stretch reads MLDKARSQSKHMDE. 4 disordered regions span residues 1-77, 92-168, 218-332, and 381-464; these read MLDK…IESL, STCA…CNGH, HLPP…DDQC, and NESS…GFFY. Polar residues-rich tracts occupy residues 39–48, 61–77, and 92–112; these read SRATLMNSSQ, GANSRHPTISSASIESL, and STCAPNNTPVHTPSGSPSLKV. A Phosphoserine modification is found at Ser114. The span at 117 to 126 shows a compositional bias: basic and acidic residues; the sequence is DIKDDPKEND. 3 positions are modified to phosphoserine: Ser141, Ser150, and Ser228. The span at 226–236 shows a compositional bias: low complexity; the sequence is AVSSPGTTAAG. The span at 258–272 shows a compositional bias: polar residues; sequence TSANKNNGKTTNSPM. The segment covering 273–305 has biased composition (low complexity); that stretch reads SILSRNNSTNNNDNNSIQSSDSRESSNNNEIGG. Residues Ser316 and Ser318 each carry the phosphoserine modification. The span at 316-325 shows a compositional bias: polar residues; that stretch reads SPSNDSQVQH. The span at 381 to 398 shows a compositional bias: low complexity; the sequence is NESSSNNASSNTDTPTNS. The span at 399-414 shows a compositional bias: polar residues; it reads RHANTSSSITSRNNFQ. Over residues 426–446 the composition is skewed to low complexity; that stretch reads PTSASSFTSTNNNNPQRNNIN. The tract at residues 508 to 594 is SIN3-binding; it reads NSASSSTKLD…QPIFESNNST (87 aa). Positions 636–766 are disordered; the sequence is NGKRIDRRLS…ATSSTSQGTR (131 aa). Ser645 is subject to Phosphoserine. Over residues 670–679 the composition is skewed to polar residues; it reads VASQTNSDYN. A compositionally biased stretch (low complexity) spans 680 to 702; sequence SLGESSTSSAPSSPSLKASSGLA. The segment covering 718-739 has biased composition (basic residues); it reads SKGKNVKPKAKSKAKQSSKKRP. The span at 740-751 shows a compositional bias: low complexity; it reads NNTTSKSKANNS. Positions 771–798 form a DNA-binding region, zn(2)-C6 fungal-type; sequence CWICRLRKKKCTEERPHCFNCERLKLDC.

In terms of assembly, component of the RPD3C(L) complex composed of at least ASH1, CTI6, DEP1, PHO23, RPD3, RXT2, RXT3, SAP30, SDS3, SIN3, UME1 and UME6. Interacts with RIM11, MCK1 and IME1. Phosphorylated by RIM11 and MCK1.

It is found in the nucleus. Functionally, component of the RPD3C(L) histone deacetylase complex (HDAC) responsible for the deacetylation of lysine residues on the N-terminal part of the core histones (H2A, H2B, H3 and H4). Histone deacetylation gives a tag for epigenetic repression and plays an important role in transcriptional regulation, cell cycle progression and developmental events. Binds to the URS1 site (5'-AGCCGCCGA-3') and recruits the RPD3 histone deacetylase complex to the promoters to negatively regulate the expression of many genes including CAR1 (arginase), several required for sporulation, mating type switching, inositol metabolism, and oxidative carbon metabolism. Also recruits the ISW2 chromatin remodeling complex to promoters in a second gene repression pathway. Associates with the master regulator of meiosis IME1 in order to activate the expression of meiosis genes. Has both a positive and negative role in regulating phospholipid biosynthesis. The sequence is that of Transcriptional regulatory protein UME6 (UME6) from Saccharomyces cerevisiae (strain ATCC 204508 / S288c) (Baker's yeast).